A 422-amino-acid chain; its full sequence is Cotranscriptional regulator ARB2A homolog (422 aa).

An N-terminal signal peptide occupies residues 1–19; that stretch reads MKLEIKCFIICKVLPLVWL. The segment at 213–253 is disordered; it reads KSKVPADQPSPDSSDEPAEKRERRERNPKETKKRRDFYEKY. A compositionally biased stretch (basic and acidic residues) spans 229 to 242; that stretch reads PAEKRERRERNPKE. Ser-299 acts as the Nucleophile in catalysis. The tract at residues 403 to 422 is disordered; the sequence is NTKTKPTPTRRSNRIKHEDL.

The protein belongs to the ARB2A family.

The protein resides in the nucleus. It is found in the cytoplasm. In terms of biological role, may play role in the regulation of alternative splicing. May have hydrolase activity. The polypeptide is Cotranscriptional regulator ARB2A homolog (arb2a) (Xenopus tropicalis (Western clawed frog)).